The primary structure comprises 344 residues: N-acetyl-gamma-glutamyl-phosphate reductase (344 aa).

Cysteine 148 is an active-site residue.

Belongs to the NAGSA dehydrogenase family. Type 1 subfamily.

The protein resides in the cytoplasm. The enzyme catalyses N-acetyl-L-glutamate 5-semialdehyde + phosphate + NADP(+) = N-acetyl-L-glutamyl 5-phosphate + NADPH + H(+). It functions in the pathway amino-acid biosynthesis; L-arginine biosynthesis; N(2)-acetyl-L-ornithine from L-glutamate: step 3/4. In terms of biological role, catalyzes the NADPH-dependent reduction of N-acetyl-5-glutamyl phosphate to yield N-acetyl-L-glutamate 5-semialdehyde. The sequence is that of N-acetyl-gamma-glutamyl-phosphate reductase from Clostridium botulinum (strain Alaska E43 / Type E3).